Here is a 468-residue protein sequence, read N- to C-terminus: Aspartate ammonia-lyase (468 aa).

L-aspartate is bound by residues T101, S140, T141, N142, T187, and H188. Positions 317-326 (GSSIMPGKVN) are SS loop. The active-site Proton acceptor is S318. Positions 319 and 324 each coordinate L-aspartate.

The protein belongs to the class-II fumarase/aspartase family. Aspartase subfamily. Homotetramer.

The catalysed reaction is L-aspartate = fumarate + NH4(+). Its activity is regulated as follows. Unlike E.coli aspartase, the enzyme is not activated by the presence of divalent metal ions at alkaline pH. In terms of biological role, catalyzes the reversible conversion of L-aspartate to fumarate and ammonia. Is highly specific for L-aspartate in the deamination reaction, and cannot use alternative substrates such as D-aspartic acid, alpha-methyl-DL-aspartic acid, beta-methyl-DL-aspartic acid or L-glutamate. In the reverse reaction, alternative nucleophiles (such as hydroxylamine, hydrazine, methoxylamine and methylamine) can replace ammonia in vitro, leading to the formation of N-substituted aspartic acid derivatives. The polypeptide is Aspartate ammonia-lyase (Bacillus sp).